We begin with the raw amino-acid sequence, 375 residues long: Alcohol dehydrogenase 1 (375 aa).

S2 bears the N-acetylserine mark. 7 residues coordinate Zn(2+): C47, H68, C98, C101, C104, C112, and C175. Residues 200–205, D224, and K229 each bind NAD(+); that span reads GLGGVG. Residue K234 is modified to N6-succinyllysine. 293-295 serves as a coordination point for NAD(+); the sequence is VGV. The residue at position 340 (K340) is an N6-succinyllysine. Position 370 (R370) interacts with NAD(+).

Belongs to the zinc-containing alcohol dehydrogenase family. As to quaternary structure, homodimer. Requires Zn(2+) as cofactor.

Its subcellular location is the cytoplasm. It catalyses the reaction a primary alcohol + NAD(+) = an aldehyde + NADH + H(+). It carries out the reaction a secondary alcohol + NAD(+) = a ketone + NADH + H(+). The sequence is that of Alcohol dehydrogenase 1 (ADH1) from Oryctolagus cuniculus (Rabbit).